Consider the following 353-residue polypeptide: UPF0283 membrane protein YPA_1696 (353 aa).

The next 3 membrane-spanning stretches (helical) occupy residues 71–91, 101–121, and 214–234; these read MVTA…VQWV, IALG…GSVV, and ESAL…FIAW.

It belongs to the UPF0283 family.

Its subcellular location is the cell inner membrane. The chain is UPF0283 membrane protein YPA_1696 from Yersinia pestis bv. Antiqua (strain Antiqua).